We begin with the raw amino-acid sequence, 122 residues long: MARIAGVNIPTAKRVPIALTYITGIGNTSAKQICEAVGIDPSRRVNELSDAEVLAVREHIDANYTVEGDLRREVQMNVKRLMDLGCYRGLRHRRNLPVRGQRTHTNARTRKGPAKAIAGKKK.

Residues 98–122 are disordered; it reads VRGQRTHTNARTRKGPAKAIAGKKK.

The protein belongs to the universal ribosomal protein uS13 family. As to quaternary structure, part of the 30S ribosomal subunit. Forms a loose heterodimer with protein S19. Forms two bridges to the 50S subunit in the 70S ribosome.

In terms of biological role, located at the top of the head of the 30S subunit, it contacts several helices of the 16S rRNA. In the 70S ribosome it contacts the 23S rRNA (bridge B1a) and protein L5 of the 50S subunit (bridge B1b), connecting the 2 subunits; these bridges are implicated in subunit movement. Contacts the tRNAs in the A and P-sites. The chain is Small ribosomal subunit protein uS13 from Roseobacter denitrificans (strain ATCC 33942 / OCh 114) (Erythrobacter sp. (strain OCh 114)).